The primary structure comprises 201 residues: Putative 3-methyladenine DNA glycosylase (201 aa).

The protein belongs to the DNA glycosylase MPG family.

The chain is Putative 3-methyladenine DNA glycosylase from Trichodesmium erythraeum (strain IMS101).